The chain runs to 295 residues: Trimeric intracellular cation channel type A (295 aa).

Residues 1–18 are Lumenal-facing; it reads MEVLDVLNLGEIAQYFSK. Residues 19–37 traverse the membrane as a helical segment; it reads MAMFPVFDVAYYIVSILYL. Residues 38-51 are Cytoplasmic-facing; that stretch reads KYEPGAVEVSRRSP. Residues 52 to 75 traverse the membrane as a helical segment; that stretch reads VASWLCAMLYCFGSYILADIMLGV. G74 is a Ca(2+) binding site. Topologically, residues 76 to 86 are lumenal; sequence CPIDYFHNNSH. A helical transmembrane segment spans residues 87 to 106; it reads ILLASAVWYLIFFCPLNLFY. Topologically, residues 107 to 144 are cytoplasmic; that stretch reads KCVAFMPVKLVLVALKEVVRTRKIAAGVHHAHHAYHHG. A 1,2-diacyl-sn-glycero-3-phospho-(1D-myo-inositol-4,5-bisphosphate) is bound by residues K122 and R126. Residues 145–162 traverse the membrane as a helical segment; sequence WLIMVITGYVKGSGVALM. Over 163–182 the chain is Lumenal; that stretch reads SNFEQLLRGVWKPETNEVLN. Residues 183 to 199 traverse the membrane as a helical segment; the sequence is MSFPTKASLYGAILFTL. The Cytoplasmic portion of the chain corresponds to 200 to 210; it reads QEAHVLPVSKS. The chain crosses the membrane as a helical span at residues 211-227; it reads TLICLFTLFMVSSKVFM. The Lumenal portion of the chain corresponds to 228–236; the sequence is TARHSHGSP. A helical membrane pass occupies residues 237 to 255; that stretch reads FALIESWVCHVLFGSPLGT. Residues 256–295 are Cytoplasmic-facing; the sequence is EDAHDHHHAAPAAAPAPLSPAKNKEELSEGTRKRKSKKAE. The tract at residues 259–295 is disordered; that stretch reads HDHHHAAPAAAPAPLSPAKNKEELSEGTRKRKSKKAE. Over residues 265 to 276 the composition is skewed to low complexity; the sequence is APAAAPAPLSPA. Basic and acidic residues predominate over residues 277–286; the sequence is KNKEELSEGT.

The protein belongs to the TMEM38 family. In terms of assembly, homotrimer; conformation seems to be controled by binding to diacylglycerol (DAG).

The protein localises to the sarcoplasmic reticulum membrane. It is found in the nucleus membrane. It carries out the reaction K(+)(in) = K(+)(out). Its activity is regulated as follows. Channel activity is activated by a change of voltage within the sarcoplasmic reticulum lumen and blocked by luminal high Ca(2+) levels. In terms of biological role, intracellular monovalent cation channel required for maintenance of rapid intracellular calcium release. Acts as a potassium counter-ion channel that functions in synchronization with calcium release from intracellular stores. Opened by a change of voltage within the sarcoplasmic reticulum lumen. This is Trimeric intracellular cation channel type A (tmem38a) from Danio rerio (Zebrafish).